A 594-amino-acid chain; its full sequence is Phostensin (594 aa).

2 stretches are compositionally biased toward basic and acidic residues: residues E18–L33 and V109–S125. 2 disordered regions span residues E18–V238 and V294–R485. S126, S134, S174, and S194 each carry phosphoserine. Composition is skewed to basic and acidic residues over residues Q133–L155 and S167–K190. T198 carries the post-translational modification Phosphothreonine. The residue at position 224 (S224) is a Phosphoserine. The span at E353–E364 shows a compositional bias: acidic residues. Pro residues predominate over residues P403–P421. S412 is subject to Phosphoserine. Position 437 is an N6-acetyllysine (K437). A Phosphoserine modification is found at S510. The segment at Y531 to L577 is disordered. The span at P558–L571 shows a compositional bias: acidic residues.

In terms of assembly, interacts with Protein phosphatase 1 (PP1).

Its subcellular location is the cytoplasm. It is found in the cytoskeleton. In terms of biological role, may target protein phosphatase 1 to F-actin cytoskeleton. The protein is Phostensin (Ppp1r18) of Mus musculus (Mouse).